Consider the following 87-residue polypeptide: Cell division topological specificity factor (87 aa).

It belongs to the MinE family.

Prevents the cell division inhibition by proteins MinC and MinD at internal division sites while permitting inhibition at polar sites. This ensures cell division at the proper site by restricting the formation of a division septum at the midpoint of the long axis of the cell. In Vibrio parahaemolyticus serotype O3:K6 (strain RIMD 2210633), this protein is Cell division topological specificity factor.